We begin with the raw amino-acid sequence, 249 residues long: Coproheme decarboxylase (249 aa).

Fe-coproporphyrin III-binding positions include Arg-131, 145-149 (YPMNK), His-172, and Gln-185. Tyr-145 is a catalytic residue.

It belongs to the ChdC family. Type 1 subfamily. Requires Fe-coproporphyrin III as cofactor.

It catalyses the reaction Fe-coproporphyrin III + 2 H2O2 + 2 H(+) = heme b + 2 CO2 + 4 H2O. It carries out the reaction Fe-coproporphyrin III + H2O2 + H(+) = harderoheme III + CO2 + 2 H2O. The catalysed reaction is harderoheme III + H2O2 + H(+) = heme b + CO2 + 2 H2O. Its pathway is porphyrin-containing compound metabolism; protoheme biosynthesis. In terms of biological role, involved in coproporphyrin-dependent heme b biosynthesis. Catalyzes the decarboxylation of Fe-coproporphyrin III (coproheme) to heme b (protoheme IX), the last step of the pathway. The reaction occurs in a stepwise manner with a three-propionate intermediate. This Staphylococcus carnosus (strain TM300) protein is Coproheme decarboxylase.